We begin with the raw amino-acid sequence, 879 residues long: DNA replication licensing factor mcm3 (879 aa).

The MCM domain maps to 306–513 (VFELLSTSLA…KDRALSEHVL (208 aa)). Residue 356–363 (GDPSTAKS) coordinates ATP. Positions 488-491 (SRFD) match the Arginine finger motif. A disordered region spans residues 679–778 (RKKHKKQRLE…STLPATSREL (100 aa)). Residues 690–713 (GEEFDSEDDNSDDMDIEESEEEMD) are compositionally biased toward acidic residues. Low complexity predominate over residues 732 to 752 (TSQSQESGSEIGSSIAGTAGS). Residues 754–778 (NVGTSNTQLSWPSTHSTLPATSREL) are compositionally biased toward polar residues.

It belongs to the MCM family. Component of the mcm2-7 complex. The complex forms a toroidal hexameric ring with the proposed subunit order mcm2-mcm6-mcm4-mcm7-mcm3-mcm5. The heterodimers of mcm4/mcm6 and mcm3/mcm5 interact with mcm2 and mcm7.

It localises to the nucleus. The catalysed reaction is ATP + H2O = ADP + phosphate + H(+). Its function is as follows. Acts as a component of the mcm2-7 complex (mcm complex) which is the putative replicative helicase essential for 'once per cell cycle' DNA replication initiation and elongation in eukaryotic cells. The active ATPase sites in the mcm2-7 ring are formed through the interaction surfaces of two neighboring subunits such that a critical structure of a conserved arginine finger motif is provided in trans relative to the ATP-binding site of the Walker A box of the adjacent subunit. The six ATPase active sites, however, are likely to contribute differentially to the complex helicase activity. The sequence is that of DNA replication licensing factor mcm3 (mcm3) from Schizosaccharomyces pombe (strain 972 / ATCC 24843) (Fission yeast).